The primary structure comprises 151 residues: Transcription antitermination protein NusB (151 aa).

The protein belongs to the NusB family.

Involved in transcription antitermination. Required for transcription of ribosomal RNA (rRNA) genes. Binds specifically to the boxA antiterminator sequence of the ribosomal RNA (rrn) operons. This chain is Transcription antitermination protein NusB, found in Thermodesulfovibrio yellowstonii (strain ATCC 51303 / DSM 11347 / YP87).